The chain runs to 424 residues: UDP-N-acetylglucosamine 1-carboxyvinyltransferase (424 aa).

22–23 is a phosphoenolpyruvate binding site; it reads KN. R93 lines the UDP-N-acetyl-alpha-D-glucosamine pocket. C117 serves as the catalytic Proton donor. Residue C117 is modified to 2-(S-cysteinyl)pyruvic acid O-phosphothioketal. UDP-N-acetyl-alpha-D-glucosamine contacts are provided by residues 122–126, D307, and I329; that span reads RPIDL.

It belongs to the EPSP synthase family. MurA subfamily.

The protein localises to the cytoplasm. It catalyses the reaction phosphoenolpyruvate + UDP-N-acetyl-alpha-D-glucosamine = UDP-N-acetyl-3-O-(1-carboxyvinyl)-alpha-D-glucosamine + phosphate. It functions in the pathway cell wall biogenesis; peptidoglycan biosynthesis. In terms of biological role, cell wall formation. Adds enolpyruvyl to UDP-N-acetylglucosamine. This Chlorobium phaeovibrioides (strain DSM 265 / 1930) (Prosthecochloris vibrioformis (strain DSM 265)) protein is UDP-N-acetylglucosamine 1-carboxyvinyltransferase.